The chain runs to 506 residues: Maturase K (506 aa).

This sequence belongs to the intron maturase 2 family. MatK subfamily.

Its subcellular location is the plastid. The protein localises to the chloroplast. Its function is as follows. Usually encoded in the trnK tRNA gene intron. Probably assists in splicing its own and other chloroplast group II introns. The protein is Maturase K of Artanema fimbriatum.